We begin with the raw amino-acid sequence, 67 residues long: MSLFPVIVIFGLSFPPIFFELLLSLAIFWLVRRALIPTGIYDFVWHPALFNTALYCCLFYLLSRLFV.

The next 2 helical transmembrane spans lie at 3–23 (LFPV…ELLL) and 43–63 (FVWH…YLLS).

Belongs to the AaeX family.

The protein localises to the cell membrane. The sequence is that of Protein AaeX from Cronobacter sakazakii (strain ATCC BAA-894) (Enterobacter sakazakii).